The chain runs to 265 residues: Thiazole synthase (265 aa).

The active-site Schiff-base intermediate with DXP is K107. Residues G168, 194–195 (AG), and 216–217 (NT) each bind 1-deoxy-D-xylulose 5-phosphate.

It belongs to the ThiG family. As to quaternary structure, homotetramer. Forms heterodimers with either ThiH or ThiS.

The protein localises to the cytoplasm. The catalysed reaction is [ThiS sulfur-carrier protein]-C-terminal-Gly-aminoethanethioate + 2-iminoacetate + 1-deoxy-D-xylulose 5-phosphate = [ThiS sulfur-carrier protein]-C-terminal Gly-Gly + 2-[(2R,5Z)-2-carboxy-4-methylthiazol-5(2H)-ylidene]ethyl phosphate + 2 H2O + H(+). The protein operates within cofactor biosynthesis; thiamine diphosphate biosynthesis. Functionally, catalyzes the rearrangement of 1-deoxy-D-xylulose 5-phosphate (DXP) to produce the thiazole phosphate moiety of thiamine. Sulfur is provided by the thiocarboxylate moiety of the carrier protein ThiS. In vitro, sulfur can be provided by H(2)S. This chain is Thiazole synthase, found in Pseudomonas aeruginosa (strain LESB58).